Reading from the N-terminus, the 480-residue chain is Cysteine--tRNA ligase (480 aa).

C27 contacts Zn(2+). The 'HIGH' region signature appears at P29–N39. Zn(2+) is bound by residues C221, H246, and E250. A 'KMSKS' region motif is present at residues K278–S282. K281 contacts ATP.

Belongs to the class-I aminoacyl-tRNA synthetase family. As to quaternary structure, monomer. The cofactor is Zn(2+).

The protein localises to the cytoplasm. It catalyses the reaction tRNA(Cys) + L-cysteine + ATP = L-cysteinyl-tRNA(Cys) + AMP + diphosphate. This chain is Cysteine--tRNA ligase, found in Borrelia garinii subsp. bavariensis (strain ATCC BAA-2496 / DSM 23469 / PBi) (Borreliella bavariensis).